The chain runs to 651 residues: Epithelial sodium channel subunit beta (651 aa).

Residues 1–50 (MFLKRWFIRALHRLQKGPGYGYSELFVWYCNNTNTHGPKRLIIEGPKKKT) lie on the Cytoplasmic side of the membrane. Residues 51–71 (LWSLFTVTFACLVFWQWGLLI) form a helical membrane-spanning segment. Residues 72-541 (QTYLSWGVSV…GGQFGFWMGG (470 aa)) are Extracellular-facing. Intrachain disulfides connect cysteine 98–cysteine 281, cysteine 205–cysteine 212, cysteine 258–cysteine 265, cysteine 370–cysteine 457, cysteine 395–cysteine 453, cysteine 399–cysteine 449, cysteine 408–cysteine 435, and cysteine 410–cysteine 424. The helical transmembrane segment at 542–562 (SVLCIIEFGEVFIDCIWIAVI) threads the bilayer. The Cytoplasmic segment spans residues 563–651 (RFVKWYKNRK…TEHHSDSEDL (89 aa)). The segment at 612 to 651 (QPPDLYLPTTLEIPGTPPPKYDSLRVHPIDTEHHSDSEDL) is disordered. Residues 633–651 (DSLRVHPIDTEHHSDSEDL) are compositionally biased toward basic and acidic residues.

It belongs to the amiloride-sensitive sodium channel (TC 1.A.6) family. SCNN1B subfamily. Component of the heterotrimeric epithelial sodium channel (ENaC) composed of an alpha/SCNN1A, a beta/SCNN1B and a gamma/SCNN1G subunit. In terms of tissue distribution, strongly expressed in gill, kidney and rectum and more weakly in brain, eye, liver and muscle.

The protein localises to the apical cell membrane. It localises to the cytoplasmic vesicle membrane. It catalyses the reaction Na(+)(in) = Na(+)(out). With respect to regulation, originally identified and characterized by its inhibition by the diuretic drug amiloride. In terms of biological role, this is one of the three pore-forming subunits of the heterotrimeric epithelial sodium channel (ENaC), a critical regulator of sodium balance and fluid homeostasis. ENaC operates in epithelial tissues, where it mediates the electrodiffusion of sodium ions from extracellular fluid through the apical membrane of cells, with water following osmotically. This is Epithelial sodium channel subunit beta from Neoceratodus forsteri (Australian lungfish).